Reading from the N-terminus, the 274-residue chain is 3-methyl-2-oxobutanoate hydroxymethyltransferase (274 aa).

Mg(2+)-binding residues include D49 and D88. 3-methyl-2-oxobutanoate contacts are provided by residues D49 to S50, D88, and K118. E120 lines the Mg(2+) pocket. The Proton acceptor role is filled by E187.

Belongs to the PanB family. As to quaternary structure, homodecamer; pentamer of dimers. The cofactor is Mg(2+).

It is found in the cytoplasm. The enzyme catalyses 3-methyl-2-oxobutanoate + (6R)-5,10-methylene-5,6,7,8-tetrahydrofolate + H2O = 2-dehydropantoate + (6S)-5,6,7,8-tetrahydrofolate. The protein operates within cofactor biosynthesis; (R)-pantothenate biosynthesis; (R)-pantoate from 3-methyl-2-oxobutanoate: step 1/2. Catalyzes the reversible reaction in which hydroxymethyl group from 5,10-methylenetetrahydrofolate is transferred onto alpha-ketoisovalerate to form ketopantoate. This chain is 3-methyl-2-oxobutanoate hydroxymethyltransferase, found in Rhodopseudomonas palustris (strain TIE-1).